The primary structure comprises 442 residues: uncharacterized protein (442 aa).

4 residues coordinate [4Fe-4S] cluster: Cys-43, Cys-49, Cys-52, and Cys-130. Residues Gln-273, Tyr-302, Glu-323, and Asp-372 each coordinate S-adenosyl-L-methionine. The active-site Nucleophile is the Cys-399.

It belongs to the class I-like SAM-binding methyltransferase superfamily. RNA M5U methyltransferase family.

This is an uncharacterized protein from Protochlamydia amoebophila (strain UWE25).